The sequence spans 229 residues: Ribosomal RNA small subunit methyltransferase G (229 aa).

Residues Gly-87, Leu-92, 138–139 (VE), and Arg-154 each bind S-adenosyl-L-methionine.

Belongs to the methyltransferase superfamily. RNA methyltransferase RsmG family.

The protein resides in the cytoplasm. It carries out the reaction guanosine(527) in 16S rRNA + S-adenosyl-L-methionine = N(7)-methylguanosine(527) in 16S rRNA + S-adenosyl-L-homocysteine. Functionally, specifically methylates the N7 position of guanine in position 527 of 16S rRNA. This chain is Ribosomal RNA small subunit methyltransferase G, found in Oleidesulfovibrio alaskensis (strain ATCC BAA-1058 / DSM 17464 / G20) (Desulfovibrio alaskensis).